A 336-amino-acid polypeptide reads, in one-letter code: Inositol 2-dehydrogenase (336 aa).

This sequence belongs to the Gfo/Idh/MocA family. In terms of assembly, homotetramer.

The catalysed reaction is myo-inositol + NAD(+) = scyllo-inosose + NADH + H(+). Functionally, involved in the oxidation of myo-inositol (MI) to 2-keto-myo-inositol (2KMI or 2-inosose). The protein is Inositol 2-dehydrogenase of Paracoccus denitrificans (strain Pd 1222).